A 138-amino-acid chain; its full sequence is Small ribosomal subunit protein uS12 (138 aa).

Residues 33–55 (KEHTNVSSPQKRGVCTRVGTMTP) are disordered. D102 carries the post-translational modification 3-methylthioaspartic acid.

Belongs to the universal ribosomal protein uS12 family. In terms of assembly, part of the 30S ribosomal subunit. Contacts proteins S8 and S17. May interact with IF1 in the 30S initiation complex.

Functionally, with S4 and S5 plays an important role in translational accuracy. In terms of biological role, interacts with and stabilizes bases of the 16S rRNA that are involved in tRNA selection in the A site and with the mRNA backbone. Located at the interface of the 30S and 50S subunits, it traverses the body of the 30S subunit contacting proteins on the other side and probably holding the rRNA structure together. The combined cluster of proteins S8, S12 and S17 appears to hold together the shoulder and platform of the 30S subunit. The polypeptide is Small ribosomal subunit protein uS12 (Bacillus velezensis (strain DSM 23117 / BGSC 10A6 / LMG 26770 / FZB42) (Bacillus amyloliquefaciens subsp. plantarum)).